A 269-amino-acid polypeptide reads, in one-letter code: Putative phosphatase M6_Spy0533 (269 aa).

Asp9 functions as the Nucleophile in the catalytic mechanism. Residue Asp9 participates in Mg(2+) binding. Ile10 contributes to the phosphate binding site. Asp11 provides a ligand contact to Mg(2+). Phosphate contacts are provided by residues 43 to 44 (TG) and Lys196. Residue Asp219 coordinates Mg(2+). Asn222 serves as a coordination point for phosphate.

The cofactor is Mg(2+).

The polypeptide is Putative phosphatase M6_Spy0533 (Streptococcus pyogenes serotype M6 (strain ATCC BAA-946 / MGAS10394)).